A 357-amino-acid polypeptide reads, in one-letter code: UDP-N-acetylglucosamine--N-acetylmuramyl-(pentapeptide) pyrophosphoryl-undecaprenol N-acetylglucosamine transferase (357 aa).

UDP-N-acetyl-alpha-D-glucosamine is bound by residues 11–13, Asn120, Arg161, Ser188, and Gln281; that span reads TGG.

Belongs to the glycosyltransferase 28 family. MurG subfamily.

The protein resides in the cell inner membrane. It carries out the reaction di-trans,octa-cis-undecaprenyl diphospho-N-acetyl-alpha-D-muramoyl-L-alanyl-D-glutamyl-meso-2,6-diaminopimeloyl-D-alanyl-D-alanine + UDP-N-acetyl-alpha-D-glucosamine = di-trans,octa-cis-undecaprenyl diphospho-[N-acetyl-alpha-D-glucosaminyl-(1-&gt;4)]-N-acetyl-alpha-D-muramoyl-L-alanyl-D-glutamyl-meso-2,6-diaminopimeloyl-D-alanyl-D-alanine + UDP + H(+). It participates in cell wall biogenesis; peptidoglycan biosynthesis. In terms of biological role, cell wall formation. Catalyzes the transfer of a GlcNAc subunit on undecaprenyl-pyrophosphoryl-MurNAc-pentapeptide (lipid intermediate I) to form undecaprenyl-pyrophosphoryl-MurNAc-(pentapeptide)GlcNAc (lipid intermediate II). The chain is UDP-N-acetylglucosamine--N-acetylmuramyl-(pentapeptide) pyrophosphoryl-undecaprenol N-acetylglucosamine transferase from Prochlorococcus marinus (strain SARG / CCMP1375 / SS120).